A 495-amino-acid chain; its full sequence is Dipeptide and tripeptide permease A (495 aa).

Residues Met1–Ser20 are Cytoplasmic-facing. Residues Ile21 to Val41 traverse the membrane as a helical segment. Residues Lys42 to Ser51 lie on the Periplasmic side of the membrane. Residues Phe52 to Leu72 traverse the membrane as a helical segment. The Cytoplasmic segment spans residues Gly73–Arg81. Helical transmembrane passes span Thr82–Glu102 and His103–Ala123. At Asn124–Thr145 the chain is on the periplasmic side. A helical membrane pass occupies residues Met146–Ala166. At Asp167–Tyr171 the chain is on the cytoplasmic side. Residues Ala172–Met192 form a helical membrane-spanning segment. The Periplasmic portion of the chain corresponds to Gln193 to Arg209. A helical membrane pass occupies residues Leu210–Leu230. The Cytoplasmic segment spans residues Leu231–Lys232. The chain crosses the membrane as a helical span at residues His233–Val253. The Periplasmic segment spans residues Lys254–Lys266. Residues Met267 to Met287 form a helical membrane-spanning segment. The Cytoplasmic segment spans residues Pro288 to Gln312. A helical membrane pass occupies residues Phe313–Asn333. The Periplasmic segment spans residues Lys334–Lys344. A helical transmembrane segment spans residues Phe345–Tyr365. At Ala366–Asn375 the chain is on the cytoplasmic side. Residues Trp376–Leu396 form a helical membrane-spanning segment. Over Ala397–Gly409 the chain is Periplasmic. A helical membrane pass occupies residues Phe410–Ala430. Over Gly431 to Arg451 the chain is Cytoplasmic. A helical transmembrane segment spans residues Val452–Pro472. The Periplasmic segment spans residues Trp473–Arg495.

This sequence belongs to the major facilitator superfamily. Proton-dependent oligopeptide transporter (POT/PTR) (TC 2.A.17) family. DtpA subfamily.

The protein resides in the cell inner membrane. Functionally, proton-dependent permease that transports di- and tripeptides. This chain is Dipeptide and tripeptide permease A, found in Chromobacterium violaceum (strain ATCC 12472 / DSM 30191 / JCM 1249 / CCUG 213 / NBRC 12614 / NCIMB 9131 / NCTC 9757 / MK).